The following is a 405-amino-acid chain: Cysteine desulfurase IscS (405 aa).

Residues 75 to 76 (AT), Asn-156, Gln-184, and 204 to 206 (SAH) each bind pyridoxal 5'-phosphate. Lys-207 is subject to N6-(pyridoxal phosphate)lysine. A pyridoxal 5'-phosphate-binding site is contributed by Thr-244. Catalysis depends on Cys-329, which acts as the Cysteine persulfide intermediate. Cys-329 contacts [2Fe-2S] cluster.

Belongs to the class-V pyridoxal-phosphate-dependent aminotransferase family. NifS/IscS subfamily. As to quaternary structure, homodimer. Forms a heterotetramer with IscU, interacts with other sulfur acceptors. Requires pyridoxal 5'-phosphate as cofactor.

It is found in the cytoplasm. The catalysed reaction is (sulfur carrier)-H + L-cysteine = (sulfur carrier)-SH + L-alanine. Its pathway is cofactor biosynthesis; iron-sulfur cluster biosynthesis. Functionally, master enzyme that delivers sulfur to a number of partners involved in Fe-S cluster assembly, tRNA modification or cofactor biosynthesis. Catalyzes the removal of elemental sulfur atoms from cysteine to produce alanine. Functions as a sulfur delivery protein for Fe-S cluster synthesis onto IscU, an Fe-S scaffold assembly protein, as well as other S acceptor proteins. This is Cysteine desulfurase IscS from Acinetobacter baumannii (strain AB307-0294).